The following is a 382-amino-acid chain: Mannosyl phosphorylinositol ceramide synthase SUR1 (382 aa).

Residues 1-6 (MRKELK) are Cytoplasmic-facing. Residues 7–27 (YLICFNILLLLSIIYYTFDLL) form a helical membrane-spanning segment. The Extracellular portion of the chain corresponds to 28-269 (TLCIDDTVKD…KALENHILSC (242 aa)). A helical transmembrane segment spans residues 270–290 (VVTGFIFGFFILYGEFTFYCW). Residues 291 to 382 (LCSKNFSNLT…SKYSLGNNSS (92 aa)) lie on the Cytoplasmic side of the membrane. Serine 349 carries the phosphoserine modification.

This sequence belongs to the glycosyltransferase 32 family. In terms of assembly, heterodimer of SUR1 and CSG2.

The protein resides in the membrane. The catalysed reaction is a 1D-myo-inositol-1-phospho-N-[(R)-2-hydroxy-very-long-chain fatty acyl]-(R)-4-hydroxysphingoid base + GDP-alpha-D-mannose = an alpha-D-mannosyl-(1&lt;-&gt;6)-1D-myo-inositol-1-phospho-N-[(R)-2-hydroxy-very-long-chain fatty acyl]-(R)-4-hydroxysphingoid base + GDP + H(+). In terms of biological role, involved in the synthesis of mannosyl phosphorylinositol ceramide. Catalyzes the addition of mannosyl to phosphorylinositol ceramide. Suppressor of RVS161 mutation. The protein is Mannosyl phosphorylinositol ceramide synthase SUR1 of Saccharomyces cerevisiae (strain ATCC 204508 / S288c) (Baker's yeast).